The following is a 74-amino-acid chain: Small ribosomal subunit protein eS28 (74 aa).

The protein belongs to the eukaryotic ribosomal protein eS28 family.

The sequence is that of Small ribosomal subunit protein eS28 from Halobacterium salinarum (strain ATCC 29341 / DSM 671 / R1).